Consider the following 123-residue polypeptide: Large ribosomal subunit protein bL12 (123 aa).

The protein belongs to the bacterial ribosomal protein bL12 family. In terms of assembly, homodimer. Part of the ribosomal stalk of the 50S ribosomal subunit. Forms a multimeric L10(L12)X complex, where L10 forms an elongated spine to which 2 to 4 L12 dimers bind in a sequential fashion. Binds GTP-bound translation factors.

In terms of biological role, forms part of the ribosomal stalk which helps the ribosome interact with GTP-bound translation factors. Is thus essential for accurate translation. The chain is Large ribosomal subunit protein bL12 from Rickettsia bellii (strain OSU 85-389).